Here is a 275-residue protein sequence, read N- to C-terminus: 2,3,4,5-tetrahydropyridine-2,6-dicarboxylate N-succinyltransferase (275 aa).

It belongs to the transferase hexapeptide repeat family.

It localises to the cytoplasm. It catalyses the reaction (S)-2,3,4,5-tetrahydrodipicolinate + succinyl-CoA + H2O = (S)-2-succinylamino-6-oxoheptanedioate + CoA. Its pathway is amino-acid biosynthesis; L-lysine biosynthesis via DAP pathway; LL-2,6-diaminopimelate from (S)-tetrahydrodipicolinate (succinylase route): step 1/3. The protein is 2,3,4,5-tetrahydropyridine-2,6-dicarboxylate N-succinyltransferase of Paraburkholderia phytofirmans (strain DSM 17436 / LMG 22146 / PsJN) (Burkholderia phytofirmans).